Consider the following 2174-residue polypeptide: Spectinabilin polyketide synthase system protein NorB (2174 aa).

One can recognise a Ketosynthase family 3 (KS3) domain in the interval 34 to 459 (REPVAVVAMG…GTNAHVILEQ (426 aa)). Catalysis depends on for beta-ketoacyl synthase activity residues C206, H341, and H381. The Malonyl-CoA:ACP transacylase (MAT) domain occupies 567-888 (FLFSGQGSQR…AAVSRAFVQG (322 aa)). The segment at 938 to 1060 (HPLLGACLEL…GQLAPEAAAP (123 aa)) is N-terminal hotdog fold. Positions 938 to 1212 (HPLLGACLEL…TRPITAGQLR (275 aa)) constitute a PKS/mFAS DH domain. Catalysis depends on H970, which acts as the Proton acceptor; for dehydratase activity. Residues 1056–1075 (EAAAPPAAPGEDWPPPGAEP) form a disordered region. The segment covering 1061–1074 (PAAPGEDWPPPGAE) has biased composition (pro residues). The C-terminal hotdog fold stretch occupies residues 1073-1212 (AEPVPLEGFY…TRPITAGQLR (140 aa)). The active-site Proton donor; for dehydratase activity is D1134. The 303-residue stretch at 1424 to 1726 (GTVDDLVLAP…QARNVGKLVL (303 aa)) folds into the Enoyl reductase (ER) domain. One can recognise a Ketoreductase (KR) domain in the interval 1736–1915 (GTILVTGGYG…ATALAWGMWA (180 aa)). Residues 2017–2092 (PAVRELVRGQ…ALTDAIEARL (76 aa)) form the Carrier domain. S2052 is modified (O-(pantetheine 4'-phosphoryl)serine).

In terms of assembly, the spectinabilin polyketide synthase complex is composed of 4 proteins, NorA, NorA', NorB and NorC. The complex comprises 6 modules with a total of 28 catalytic domains catalyzing 7 chain elongations. NorA comprises one module, NorA' two modules, NorB one module and NorC two modules. Requires pantetheine 4'-phosphate as cofactor.

The catalysed reaction is 4-nitrobenzoyl-CoA + 6 (S)-methylmalonyl-CoA + malonyl-CoA + 6 NADPH + 12 H(+) = demethyldeoxyspectinabilin + 7 CO2 + 6 NADP(+) + 8 CoA + 5 H2O. The protein operates within antibiotic biosynthesis. Its pathway is polyketide biosynthesis. Its function is as follows. Component of a type I modular polyketide synthase (PKS) that generates the backbone of the antibiotic spectinabilin (also known as neoaureothin), a nitroaryl-substituted polyketide metabolite. This PKS system accepts the unusual starter unit 4-nitrobenzoyl-CoA and extends it by 6 molecules of (S)-methylmalonyl-CoA and a single molecule of malonyl-CoA. This is Spectinabilin polyketide synthase system protein NorB from Streptomyces orinoci (Streptoverticillium orinoci).